We begin with the raw amino-acid sequence, 228 residues long: UPF0758 protein STER_1430 (228 aa).

The MPN domain maps to 103–225 (QIMSSQQVAR…YYSFREERED (123 aa)). Residues histidine 174, histidine 176, and aspartate 187 each contribute to the Zn(2+) site. Positions 174–187 (HNHPSGEAYPSRND) match the JAMM motif motif.

It belongs to the UPF0758 family.

The chain is UPF0758 protein STER_1430 from Streptococcus thermophilus (strain ATCC BAA-491 / LMD-9).